The sequence spans 393 residues: UDP-galactose translocator (393 aa).

10 helical membrane-spanning segments follow: residues 3–23, 37–57, 65–85, 97–117, 140–160, 169–189, 200–220, 238–258, 269–289, and 315–335; these read AVGS…AGAL, YISL…IRYA, FFAT…CLLL, LVLF…KLAV, TFQV…VLML, WASL…QAGG, GVGL…GVYF, LGLF…GTAV, PAVW…AVVV, and LFGF…IGAV. Residues 353–393 form a disordered region; it reads APTSGPCTHQQPPGQPPPPQLSSHHGDLSTEPFLPKSVLVK.

The protein belongs to the nucleotide-sugar transporter family. SLC35A subfamily. Interacts with SLC35A3; the interaction is reduced in the presence of SLC35A4. Found in a complex with SLC35A3 and SLC35A4.

It is found in the golgi apparatus membrane. The catalysed reaction is UMP(out) + UDP-alpha-D-galactose(in) = UMP(in) + UDP-alpha-D-galactose(out). It catalyses the reaction UDP-N-acetyl-alpha-D-galactosamine(in) + UMP(out) = UDP-N-acetyl-alpha-D-galactosamine(out) + UMP(in). It carries out the reaction UMP(out) + UDP-alpha-D-glucose(in) = UMP(in) + UDP-alpha-D-glucose(out). The enzyme catalyses UMP(out) + UDP-N-acetyl-alpha-D-glucosamine(in) = UMP(in) + UDP-N-acetyl-alpha-D-glucosamine(out). The catalysed reaction is UDP-alpha-D-galactose(in) + AMP(out) = UDP-alpha-D-galactose(out) + AMP(in). It catalyses the reaction UDP-alpha-D-galactose(in) + CMP(out) = UDP-alpha-D-galactose(out) + CMP(in). It carries out the reaction UDP-N-acetyl-alpha-D-galactosamine(out) + UDP-alpha-D-galactose(in) = UDP-N-acetyl-alpha-D-galactosamine(in) + UDP-alpha-D-galactose(out). The enzyme catalyses UDP-N-acetyl-alpha-D-glucosamine(out) + UDP-alpha-D-galactose(in) = UDP-N-acetyl-alpha-D-glucosamine(in) + UDP-alpha-D-galactose(out). The catalysed reaction is UDP-alpha-D-galactose(in) + UDP-alpha-D-glucose(out) = UDP-alpha-D-galactose(out) + UDP-alpha-D-glucose(in). It catalyses the reaction UMP(out) + CMP(in) = UMP(in) + CMP(out). It carries out the reaction UMP(out) + AMP(in) = UMP(in) + AMP(out). In terms of biological role, transports uridine diphosphate galactose (UDP-galactose) from the cytosol into the Golgi apparatus, functioning as an antiporter that exchanges UDP-galactose for UMP. It is also able to exchange UDP-galactose for AMP and CMP, and to transport UDP-N-acetylgalactosamine (UDP-GalNAc) and other nucleotide sugars. As a provider of UDP-galactose to galactosyltransferases present in the Golgi apparatus, it is necessary for globotriaosylceramide/globoside (Gb3Cer) synthesis from lactosylceramide. The polypeptide is UDP-galactose translocator (Bos taurus (Bovine)).